The following is an 801-amino-acid chain: Na(+)/H(+) antiporter subunit A1 (801 aa).

Helical transmembrane passes span 1 to 21 (MSLL…IPIL), 28 to 48 (IHLG…MLTL), 79 to 99 (LGLL…LYSI), 117 to 137 (LFMG…LYLF), 166 to 186 (LIIT…LAIP), 206 to 226 (PFFI…SAQF), 265 to 285 (IFAA…ITLF), 300 to 320 (ILAF…GIGA), 337 to 357 (FTAA…LFMI), 373 to 393 (LGGL…TALS), 427 to 447 (LGYL…VYSI), 472 to 492 (ILML…GLFP), 522 to 542 (GLTP…LLIV), 591 to 611 (LVII…SVPF), 623 to 643 (IFEV…LFAK), 646 to 666 (LFNI…FIFF), 671 to 691 (LALT…LCFY), 707 to 727 (LTNA…GLIA), and 764 to 784 (MDTL…YTMI).

This sequence belongs to the CPA3 antiporters (TC 2.A.63) subunit A family. In terms of assembly, may form a heterooligomeric complex that consists of seven subunits: mnhA1, mnhB1, mnhC1, mnhD1, mnhE1, mnhF1 and mnhG1.

The protein localises to the cell membrane. In terms of biological role, mnh complex is a Na(+)/H(+) antiporter involved in Na(+) excretion. This chain is Na(+)/H(+) antiporter subunit A1 (mnhA1), found in Staphylococcus aureus (strain bovine RF122 / ET3-1).